The sequence spans 510 residues: Maturase K (510 aa).

Belongs to the intron maturase 2 family. MatK subfamily.

It is found in the plastid. Its subcellular location is the chloroplast. Functionally, usually encoded in the trnK tRNA gene intron. Probably assists in splicing its own and other chloroplast group II introns. The chain is Maturase K from Spirodela intermedia (Intermediate duckweed).